The primary structure comprises 311 residues: GTP cyclohydrolase MptA (311 aa).

It belongs to the GTP cyclohydrolase IV family. In terms of assembly, homodimer. It depends on Fe(2+) as a cofactor.

It carries out the reaction GTP + H2O = 7,8-dihydroneopterin 2',3'-cyclic phosphate + formate + diphosphate + H(+). It functions in the pathway cofactor biosynthesis; 5,6,7,8-tetrahydromethanopterin biosynthesis. Converts GTP to 7,8-dihydro-D-neopterin 2',3'-cyclic phosphate, the first intermediate in the biosynthesis of coenzyme methanopterin. The chain is GTP cyclohydrolase MptA from Halobacterium salinarum (strain ATCC 29341 / DSM 671 / R1).